We begin with the raw amino-acid sequence, 357 residues long: 4-hydroxymandelate oxidase (357 aa).

The 357-residue stretch at 1–357 (MTYVSLADLE…RRLNTKLGVV (357 aa)) folds into the FMN hydroxy acid dehydrogenase domain. Residue Q126 coordinates FMN. Residue Y128 participates in a 2-oxocarboxylate binding. T154 contributes to the FMN binding site. R163 is a binding site for a 2-oxocarboxylate. K228 contacts FMN. Residue H252 is the Proton acceptor of the active site. R255 contacts a 2-oxocarboxylate. FMN contacts are provided by residues 283–287 (DGGIR) and 306–307 (GR).

The protein belongs to the FMN-dependent alpha-hydroxy acid dehydrogenase family. The cofactor is FMN.

The catalysed reaction is (S)-4-hydroxymandelate + O2 = 4-hydroxyphenylglyoxylate + H2O2. Its pathway is antibiotic biosynthesis; vancomycin biosynthesis. Catalyzes the oxidation of p-hydroxymandelate to p-hydroxybenzoylformate in the biosynthesis of L-(4-hydroxyphenyl)glycine and L-(3,5-dihydroxyphenyl)glycine, 2 non-proteinogenic amino acids occurring in the vancomycin group of antibiotics. This chain is 4-hydroxymandelate oxidase (hmo), found in Amycolatopsis orientalis (Nocardia orientalis).